The chain runs to 184 residues: Holliday junction branch migration complex subunit RuvA (184 aa).

The domain I stretch occupies residues 1 to 61; that stretch reads MIAALRGNIF…ENEYTLYGFA (61 aa). A domain II region spans residues 62–135; sequence DKNEKKLFDS…GEFEVVFEEQ (74 aa). Gln135 is a region of interest (flexible linker). Residues 135-184 form a domain III region; the sequence is QNPVFNQALSALESLGFNKNDIVKALNGIKSDNLEETIKLALKKLSKDIK.

This sequence belongs to the RuvA family. In terms of assembly, homotetramer. Forms an RuvA(8)-RuvB(12)-Holliday junction (HJ) complex. HJ DNA is sandwiched between 2 RuvA tetramers; dsDNA enters through RuvA and exits via RuvB. An RuvB hexamer assembles on each DNA strand where it exits the tetramer. Each RuvB hexamer is contacted by two RuvA subunits (via domain III) on 2 adjacent RuvB subunits; this complex drives branch migration. In the full resolvosome a probable DNA-RuvA(4)-RuvB(12)-RuvC(2) complex forms which resolves the HJ.

The protein localises to the cytoplasm. Functionally, the RuvA-RuvB-RuvC complex processes Holliday junction (HJ) DNA during genetic recombination and DNA repair, while the RuvA-RuvB complex plays an important role in the rescue of blocked DNA replication forks via replication fork reversal (RFR). RuvA specifically binds to HJ cruciform DNA, conferring on it an open structure. The RuvB hexamer acts as an ATP-dependent pump, pulling dsDNA into and through the RuvAB complex. HJ branch migration allows RuvC to scan DNA until it finds its consensus sequence, where it cleaves and resolves the cruciform DNA. The sequence is that of Holliday junction branch migration complex subunit RuvA from Nautilia profundicola (strain ATCC BAA-1463 / DSM 18972 / AmH).